The sequence spans 776 residues: Reticulon-1 (776 aa).

Disordered stretches follow at residues 1-103, 136-168, 204-244, and 285-580; these read MAAP…GEGS, ISES…DSGI, EVKH…EPAP, and LTEI…APPP. Basic and acidic residues predominate over residues 204 to 240; it reads EVKHQEQNHPELEDKDLDFKNKDTDISIKPEGVREPD. Ser-327 carries the phosphoserine modification. The segment covering 328-341 has biased composition (low complexity); the sequence is PGSITPPSSGTEPS. Phosphoserine is present on residues Ser-350, Ser-352, and Ser-487. The span at 497 to 511 shows a compositional bias: basic and acidic residues; it reads AIREETGVRAEERAP. One can recognise a Reticulon domain in the interval 589 to 776; sequence AIDLLYWRDI…KIPGAKRHAE (188 aa). 2 consecutive transmembrane segments (helical) span residues 603–623 and 705–725; these read IVFG…VVSV and FAVL…LTLL.

Interacts with NDRG1. Interacts with BACE1. Interacts with TMEM33. Phosphorylated.

It is found in the endoplasmic reticulum membrane. The protein localises to the golgi apparatus membrane. Functionally, inhibits amyloid precursor protein processing, probably by blocking BACE1 activity. This is Reticulon-1 (RTN1) from Pan troglodytes (Chimpanzee).